A 310-amino-acid chain; its full sequence is ADP-L-glycero-D-manno-heptose-6-epimerase (310 aa).

NADP(+)-binding positions include 10-11, 31-32, Lys38, Lys53, 75-79, and Asn92; these read FI, DN, and EGACS. Tyr140 acts as the Proton acceptor in catalysis. Lys144 is a binding site for NADP(+). Asn169 lines the substrate pocket. NADP(+)-binding residues include Val170 and Lys178. Lys178 (proton acceptor) is an active-site residue. Substrate is bound by residues Ser180, His187, 201-204, Arg209, and Tyr272; that span reads FEGS.

Belongs to the NAD(P)-dependent epimerase/dehydratase family. HldD subfamily. As to quaternary structure, homopentamer. NADP(+) is required as a cofactor.

It carries out the reaction ADP-D-glycero-beta-D-manno-heptose = ADP-L-glycero-beta-D-manno-heptose. The protein operates within nucleotide-sugar biosynthesis; ADP-L-glycero-beta-D-manno-heptose biosynthesis; ADP-L-glycero-beta-D-manno-heptose from D-glycero-beta-D-manno-heptose 7-phosphate: step 4/4. Its pathway is bacterial outer membrane biogenesis; LPS core biosynthesis. Its function is as follows. Catalyzes the interconversion between ADP-D-glycero-beta-D-manno-heptose and ADP-L-glycero-beta-D-manno-heptose via an epimerization at carbon 6 of the heptose. This chain is ADP-L-glycero-D-manno-heptose-6-epimerase, found in Klebsiella pneumoniae.